Here is an 889-residue protein sequence, read N- to C-terminus: Voltage-gated potassium channel KCNC3 (889 aa).

Residues 1-80 form an important for normal N-type inactivation region; the sequence is MLSSVCVWSF…CSGLPAVAMG (80 aa). Over 1-291 the chain is Cytoplasmic; it reads MLSSVCVWSF…EDPYSSRAAR (291 aa). A disordered region spans residues 10–66; that stretch reads FSGRQGTRKQHSQPAPTPQPPESSPPPLLPPPQQQCAQPGTAASPAGAPLSCGPGGR. Positions 24 to 42 are enriched in pro residues; the sequence is APTPQPPESSPPPLLPPPQ. Zn(2+)-binding residues include His-159, Cys-165, Cys-186, and Cys-187. The interval 202-231 is disordered; it reads DSFEAPDSSGNANANAGGAHDAGLDDEAGA. The span at 211–222 shows a compositional bias: low complexity; it reads GNANANAGGAHD. A helical membrane pass occupies residues 292–310; the sequence is YVAFASLFFILISITTFCL. The N-linked (GlcNAc...) asparagine glycan is linked to Asn-321. A helical membrane pass occupies residues 352 to 371; the sequence is VEGVCVVWFTFEFLMRVTFC. The Cytoplasmic portion of the chain corresponds to 372 to 380; that stretch reads PDKVEFLKS. Residues 381–399 form a helical membrane-spanning segment; sequence SLNIIDCVAILPFYLEVGL. The helical; Voltage-sensor transmembrane segment at 413–435 threads the bilayer; it reads FLRVVRFVRILRIFKLTRHFVGL. Residues 436 to 448 are Cytoplasmic-facing; the sequence is RVLGHTLRASTNE. Residues 449–470 traverse the membrane as a helical segment; sequence FLLLIIFLALGVLIFATMIYYA. The K(+) site is built by Thr-504, Leu-505, Gly-506, and Tyr-507. The Selectivity filter signature appears at 504–509; it reads TLGYGD. The helical transmembrane segment at 519–540 threads the bilayer; sequence LVGALCALAGVLTIAMPVPVIV. The Cytoplasmic portion of the chain corresponds to 541–889; the sequence is NNFGMYYSLA…FPSRHSSPAV (349 aa). Disordered stretches follow at residues 557 to 627, 691 to 834, and 852 to 889; these read PKKK…LLRG, IDQP…PQSL, and TLGF…SPAV. Residue Arg-626 is modified to Omega-N-methylarginine. Residues Ser-697 and Ser-702 each carry the phosphoserine modification. Residues 748–764 are compositionally biased toward low complexity; it reads SQAPPASCPTSTPTQQP. The residue at position 759 (Thr-759) is a Phosphothreonine. Basic residues predominate over residues 794–808; it reads HRSHQPPGKHQRGGR.

It belongs to the potassium channel family. C (Shaw) (TC 1.A.1.2) subfamily. Kv3.3/KCNC3 sub-subfamily. Homotetramer. Heterotetramer with KCNC1. Interacts (via C-terminus) with HAX1; this interaction modulates channel gating. Identified in a complex with ACTR3, a subunit of the Arp2/3 complex; this interaction is indirect and depends on the presence of HAX1. In terms of processing, N-glycosylated. Detected on Purkinje cells in the cerebellum molecular layer (at protein level).

It localises to the cell membrane. The protein localises to the presynaptic cell membrane. It is found in the perikaryon. The protein resides in the cell projection. Its subcellular location is the axon. It localises to the dendrite. The protein localises to the dendritic spine membrane. It is found in the cytoplasm. The protein resides in the cell cortex. Its subcellular location is the cytoskeleton. The catalysed reaction is K(+)(in) = K(+)(out). Voltage-gated potassium channel that plays an important role in the rapid repolarization of fast-firing brain neurons. The channel opens in response to the voltage difference across the membrane, forming a potassium-selective channel through which potassium ions pass in accordance with their electrochemical gradient. The channel displays rapid activation and inactivation kinetics. It plays a role in the regulation of the frequency, shape and duration of action potentials in Purkinje cells. Required for normal survival of cerebellar neurons, probably via its role in regulating the duration and frequency of action potentials that in turn regulate the activity of voltage-gated Ca(2+) channels and cellular Ca(2+) homeostasis. Required for normal motor function. Plays a role in the reorganization of the cortical actin cytoskeleton and the formation of actin veil structures in neuronal growth cones via its interaction with HAX1 and the Arp2/3 complex. The chain is Voltage-gated potassium channel KCNC3 from Rattus norvegicus (Rat).